The following is a 123-amino-acid chain: MPTVNQLIRKPRIAPVKRNKVPAMQQNPQKRGVCTRVYTTTPKKPNSALRKVAKIRLTNGFEVIGYIPGEGHNLQEHSVVMIRGGRVKDLPGVRYHIIRGVLDTQGVKNRKQRRSKYGAKRPK.

Aspartate 89 is subject to 3-methylthioaspartic acid.

Belongs to the universal ribosomal protein uS12 family. Part of the 30S ribosomal subunit. Contacts proteins S8 and S17. May interact with IF1 in the 30S initiation complex.

With S4 and S5 plays an important role in translational accuracy. Functionally, interacts with and stabilizes bases of the 16S rRNA that are involved in tRNA selection in the A site and with the mRNA backbone. Located at the interface of the 30S and 50S subunits, it traverses the body of the 30S subunit contacting proteins on the other side and probably holding the rRNA structure together. The combined cluster of proteins S8, S12 and S17 appears to hold together the shoulder and platform of the 30S subunit. This is Small ribosomal subunit protein uS12 from Mesorhizobium japonicum (strain LMG 29417 / CECT 9101 / MAFF 303099) (Mesorhizobium loti (strain MAFF 303099)).